The primary structure comprises 246 residues: UPF0736 protein Aflv_2136 (246 aa).

This sequence belongs to the UPF0736 family.

In Anoxybacillus flavithermus (strain DSM 21510 / WK1), this protein is UPF0736 protein Aflv_2136.